The sequence spans 232 residues: Ribose-5-phosphate isomerase A (232 aa).

Substrate is bound by residues Thr-28–Thr-31, Asp-83–Asp-86, and Lys-96–Gly-99. The Proton acceptor role is filled by Glu-105. A substrate-binding site is contributed by Lys-123.

This sequence belongs to the ribose 5-phosphate isomerase family. As to quaternary structure, homodimer.

It carries out the reaction aldehydo-D-ribose 5-phosphate = D-ribulose 5-phosphate. It participates in carbohydrate degradation; pentose phosphate pathway; D-ribose 5-phosphate from D-ribulose 5-phosphate (non-oxidative stage): step 1/1. Functionally, catalyzes the reversible conversion of ribose-5-phosphate to ribulose 5-phosphate. This is Ribose-5-phosphate isomerase A from Allorhizobium ampelinum (strain ATCC BAA-846 / DSM 112012 / S4) (Agrobacterium vitis (strain S4)).